Reading from the N-terminus, the 112-residue chain is UPF0060 membrane protein Arth_4238 (112 aa).

The next 4 membrane-spanning stretches (helical) occupy residues 7–27 (ILLF…VWQA), 33–53 (EWWW…AATL), 62–82 (ILAA…MVFD), and 88–108 (RWDI…MFAP).

Belongs to the UPF0060 family.

It localises to the cell membrane. This is UPF0060 membrane protein Arth_4238 from Arthrobacter sp. (strain FB24).